We begin with the raw amino-acid sequence, 580 residues long: 2-isopropylmalate synthase (580 aa).

Polar residues predominate over residues 1–11; the sequence is MSATAFPTLST. The interval 1–37 is disordered; that stretch reads MSATAFPTLSTPAGEIPATAPAWNRQRRSQMPSHRYR. The Pyruvate carboxyltransferase domain maps to 61–334; that stretch reads PLWVPVDLRD…DPMIDFSDID (274 aa). 4 residues coordinate Mg(2+): D70, H273, H275, and N309. A regulatory domain region spans residues 476–580; it reads EGEADAPQAD…ARAVAEVRPG (105 aa).

Belongs to the alpha-IPM synthase/homocitrate synthase family. LeuA type 2 subfamily. In terms of assembly, homodimer. Mg(2+) is required as a cofactor.

It localises to the cytoplasm. It catalyses the reaction 3-methyl-2-oxobutanoate + acetyl-CoA + H2O = (2S)-2-isopropylmalate + CoA + H(+). It functions in the pathway amino-acid biosynthesis; L-leucine biosynthesis; L-leucine from 3-methyl-2-oxobutanoate: step 1/4. Catalyzes the condensation of the acetyl group of acetyl-CoA with 3-methyl-2-oxobutanoate (2-ketoisovalerate) to form 3-carboxy-3-hydroxy-4-methylpentanoate (2-isopropylmalate). The chain is 2-isopropylmalate synthase from Nocardia farcinica (strain IFM 10152).